Here is an 89-residue protein sequence, read N- to C-terminus: Small ribosomal subunit protein uS15 (89 aa).

A compositionally biased stretch (basic and acidic residues) spans 1–21 (MALTTEEKKQVLSEYGLHETD). The disordered stretch occupies residues 1 to 24 (MALTTEEKKQVLSEYGLHETDTGS).

Belongs to the universal ribosomal protein uS15 family. In terms of assembly, part of the 30S ribosomal subunit. Forms a bridge to the 50S subunit in the 70S ribosome, contacting the 23S rRNA.

Functionally, one of the primary rRNA binding proteins, it binds directly to 16S rRNA where it helps nucleate assembly of the platform of the 30S subunit by binding and bridging several RNA helices of the 16S rRNA. Forms an intersubunit bridge (bridge B4) with the 23S rRNA of the 50S subunit in the ribosome. This Rhodococcus jostii (strain RHA1) protein is Small ribosomal subunit protein uS15.